The chain runs to 465 residues: Cysteine--tRNA ligase (465 aa).

A Zn(2+)-binding site is contributed by Cys-29. A 'HIGH' region motif is present at residues 31–41; the sequence is PTVYNYIHIGN. Residues Cys-209, His-234, and Glu-238 each contribute to the Zn(2+) site. A 'KMSKS' region motif is present at residues 266-270; the sequence is KMSKS. Lys-269 is an ATP binding site. Ser-270 carries the post-translational modification Phosphoserine.

This sequence belongs to the class-I aminoacyl-tRNA synthetase family. Monomer. It depends on Zn(2+) as a cofactor.

The protein localises to the cytoplasm. It catalyses the reaction tRNA(Cys) + L-cysteine + ATP = L-cysteinyl-tRNA(Cys) + AMP + diphosphate. This is Cysteine--tRNA ligase from Bacillus cytotoxicus (strain DSM 22905 / CIP 110041 / 391-98 / NVH 391-98).